The chain runs to 242 residues: uncharacterized protein (242 aa).

In terms of domain architecture, S4 RNA-binding spans 2 to 62 (EKAYKILSVQ…VEKPSVIFED (61 aa)). Asp-93 is an active-site residue.

This sequence belongs to the pseudouridine synthase RluA family.

It catalyses the reaction a uridine in RNA = a pseudouridine in RNA. This is an uncharacterized protein from Helicobacter pylori (strain ATCC 700392 / 26695) (Campylobacter pylori).